Reading from the N-terminus, the 537-residue chain is 2-succinyl-5-enolpyruvyl-6-hydroxy-3-cyclohexene-1-carboxylate synthase (537 aa).

This sequence belongs to the TPP enzyme family. MenD subfamily. Homodimer. Requires Mg(2+) as cofactor. Mn(2+) is required as a cofactor. Thiamine diphosphate serves as cofactor.

The enzyme catalyses isochorismate + 2-oxoglutarate + H(+) = 5-enolpyruvoyl-6-hydroxy-2-succinyl-cyclohex-3-ene-1-carboxylate + CO2. It participates in quinol/quinone metabolism; 1,4-dihydroxy-2-naphthoate biosynthesis; 1,4-dihydroxy-2-naphthoate from chorismate: step 2/7. It functions in the pathway quinol/quinone metabolism; menaquinone biosynthesis. Catalyzes the thiamine diphosphate-dependent decarboxylation of 2-oxoglutarate and the subsequent addition of the resulting succinic semialdehyde-thiamine pyrophosphate anion to isochorismate to yield 2-succinyl-5-enolpyruvyl-6-hydroxy-3-cyclohexene-1-carboxylate (SEPHCHC). The sequence is that of 2-succinyl-5-enolpyruvyl-6-hydroxy-3-cyclohexene-1-carboxylate synthase from Desulfotalea psychrophila (strain LSv54 / DSM 12343).